Reading from the N-terminus, the 230-residue chain is Large ribosomal subunit protein uL1 (230 aa).

This sequence belongs to the universal ribosomal protein uL1 family. In terms of assembly, part of the 50S ribosomal subunit.

In terms of biological role, binds directly to 23S rRNA. The L1 stalk is quite mobile in the ribosome, and is involved in E site tRNA release. Protein L1 is also a translational repressor protein, it controls the translation of the L11 operon by binding to its mRNA. This chain is Large ribosomal subunit protein uL1, found in Leuconostoc citreum (strain KM20).